The sequence spans 490 residues: Serine hydroxymethyltransferase, mitochondrial (490 aa).

Residues 1–20 (MFPRASALAKCMATVHRRGL) constitute a mitochondrion transit peptide. Lys-265 is subject to N6-(pyridoxal phosphate)lysine.

It belongs to the SHMT family. As to quaternary structure, homotetramer. Interacts with NAP1. It depends on pyridoxal 5'-phosphate as a cofactor.

Its subcellular location is the mitochondrion. The catalysed reaction is (6R)-5,10-methylene-5,6,7,8-tetrahydrofolate + glycine + H2O = (6S)-5,6,7,8-tetrahydrofolate + L-serine. The protein operates within one-carbon metabolism; tetrahydrofolate interconversion. Its function is as follows. Interconversion of serine and glycine. This Saccharomyces cerevisiae (strain ATCC 204508 / S288c) (Baker's yeast) protein is Serine hydroxymethyltransferase, mitochondrial (SHM1).